The following is a 159-amino-acid chain: Ribosomal RNA large subunit methyltransferase H (159 aa).

S-adenosyl-L-methionine is bound by residues Ile76, Gly108, and 127-132 (FSKMTF).

This sequence belongs to the RNA methyltransferase RlmH family. In terms of assembly, homodimer.

It is found in the cytoplasm. It catalyses the reaction pseudouridine(1915) in 23S rRNA + S-adenosyl-L-methionine = N(3)-methylpseudouridine(1915) in 23S rRNA + S-adenosyl-L-homocysteine + H(+). Functionally, specifically methylates the pseudouridine at position 1915 (m3Psi1915) in 23S rRNA. The polypeptide is Ribosomal RNA large subunit methyltransferase H (Clostridium botulinum (strain Loch Maree / Type A3)).